We begin with the raw amino-acid sequence, 398 residues long: 1-deoxy-D-xylulose 5-phosphate reductoisomerase (398 aa).

7 residues coordinate NADPH: Thr11, Gly12, Ser13, Ile14, Arg38, Asn39, and Asn125. Lys126 is a binding site for 1-deoxy-D-xylulose 5-phosphate. Glu127 is a binding site for NADPH. Asp151 provides a ligand contact to Mn(2+). Positions 152, 153, 179, and 202 each coordinate 1-deoxy-D-xylulose 5-phosphate. Glu153 lines the Mn(2+) pocket. Gly208 is a binding site for NADPH. Residues Ser215, Asn220, Lys221, and Glu224 each contribute to the 1-deoxy-D-xylulose 5-phosphate site. A Mn(2+)-binding site is contributed by Glu224.

The protein belongs to the DXR family. Mg(2+) is required as a cofactor. It depends on Mn(2+) as a cofactor.

It catalyses the reaction 2-C-methyl-D-erythritol 4-phosphate + NADP(+) = 1-deoxy-D-xylulose 5-phosphate + NADPH + H(+). The protein operates within isoprenoid biosynthesis; isopentenyl diphosphate biosynthesis via DXP pathway; isopentenyl diphosphate from 1-deoxy-D-xylulose 5-phosphate: step 1/6. In terms of biological role, catalyzes the NADPH-dependent rearrangement and reduction of 1-deoxy-D-xylulose-5-phosphate (DXP) to 2-C-methyl-D-erythritol 4-phosphate (MEP). In Burkholderia mallei (strain NCTC 10247), this protein is 1-deoxy-D-xylulose 5-phosphate reductoisomerase.